Consider the following 869-residue polypeptide: MASPYNAGEIEQKWQQRWAEWGLDKTPIASDLPKFYALSMFPYPSGNLHMGHVRNYTITDVIARLKRMQGYQVLHPMGWDAFGLPAENAAIERGIPPKQWTEKNIAQMRAQLQQLGLSIDWEREVATCAPDYYRWTQWLFLEFFQAGLAYQKEATVNWDPIDQTVLANEQVDSEGRSWRSGAMVERKLLRQWFLKITDYAEALLNDLEQLTGWPERVKLMQSHWIGKSVGAYLEFPIKDSQEKIAVFTTRPDTVYGVTYVVLAPEHPLTKVVTTAEQQGTVDEFVAMVAKESEIERTAEDKPKRGVKTGGIAINPFNGEEIPILIADYVLYEYGTGAVMGVPAHDQRDFKFAQDNNLPMQVVIIPDDADNSDVNLTVAYTEAGVMVNSAQFTGMASPKAKQAIIKFAEDNDYGRAKVQYRLRDWLISRQRYWGCPIPIIHCDDCGAVPVPTKDLPVELPDNVEFSGRGPSPLAKLEDWINVPCPSCGKPARRETDTMDTFIDSSWYFLRYADAQNTELPFDGEKVAHWLPVDQYVGGIEHAILHLLYSRFFTKVLADRQLIPVKEPFQKLLTQGMVQGITYKNPTTGKYVPAKDLQTGQQVIDPKDPKDPDSGEPLQVFYEKMSKSKFNGVDPQEVLAKYGADTARMFILFKAPPEKDLEWDDADVEGQFRFLNRVWRLVTDYIGDPAGIRFAVRPETLVTNEPLTKAEKDLRRAIHGAIKEVAEDLNDDYQFNTAISEMMKLSNALIAATDLISFPVYQEGIETLLLLLAPFAPHLTEELWHRLGRTDSIHQQAWLQVDPTALVLDEITLVIQVLGKTRGTITVPASADKTQLEELARNSDLAQRYLEGKTIKKVIVVPGKLVNFVIT.

The 'HIGH' region signature appears at 42-52 (PYPSGNLHMGH). The 'KMSKS' region signature appears at 622 to 626 (KMSKS). Lysine 625 contacts ATP.

It belongs to the class-I aminoacyl-tRNA synthetase family.

It is found in the cytoplasm. It catalyses the reaction tRNA(Leu) + L-leucine + ATP = L-leucyl-tRNA(Leu) + AMP + diphosphate. This chain is Leucine--tRNA ligase, found in Synechocystis sp. (strain ATCC 27184 / PCC 6803 / Kazusa).